A 301-amino-acid chain; its full sequence is tRNA pseudouridine synthase B (301 aa).

Asp38 (nucleophile) is an active-site residue.

It belongs to the pseudouridine synthase TruB family. Type 1 subfamily.

It carries out the reaction uridine(55) in tRNA = pseudouridine(55) in tRNA. Its function is as follows. Responsible for synthesis of pseudouridine from uracil-55 in the psi GC loop of transfer RNAs. The protein is tRNA pseudouridine synthase B of Lacticaseibacillus paracasei (strain ATCC 334 / BCRC 17002 / CCUG 31169 / CIP 107868 / KCTC 3260 / NRRL B-441) (Lactobacillus paracasei).